The primary structure comprises 485 residues: Glutamyl-tRNA(Gln) amidotransferase subunit A (485 aa).

Active-site charge relay system residues include Lys78 and Ser153. The Acyl-ester intermediate role is filled by Ser177.

This sequence belongs to the amidase family. GatA subfamily. Heterotrimer of A, B and C subunits.

The enzyme catalyses L-glutamyl-tRNA(Gln) + L-glutamine + ATP + H2O = L-glutaminyl-tRNA(Gln) + L-glutamate + ADP + phosphate + H(+). Functionally, allows the formation of correctly charged Gln-tRNA(Gln) through the transamidation of misacylated Glu-tRNA(Gln) in organisms which lack glutaminyl-tRNA synthetase. The reaction takes place in the presence of glutamine and ATP through an activated gamma-phospho-Glu-tRNA(Gln). The protein is Glutamyl-tRNA(Gln) amidotransferase subunit A of Bacillus cytotoxicus (strain DSM 22905 / CIP 110041 / 391-98 / NVH 391-98).